The sequence spans 66 residues: Large ribosomal subunit protein bL33c (66 aa).

This sequence belongs to the bacterial ribosomal protein bL33 family.

The protein resides in the plastid. Its subcellular location is the chloroplast. The chain is Large ribosomal subunit protein bL33c from Lobularia maritima (Sweet alyssum).